The primary structure comprises 268 residues: tRNA pseudouridine synthase A (268 aa).

D52 functions as the Nucleophile in the catalytic mechanism. Position 110 (Y110) interacts with substrate.

It belongs to the tRNA pseudouridine synthase TruA family. In terms of assembly, homodimer.

It catalyses the reaction uridine(38/39/40) in tRNA = pseudouridine(38/39/40) in tRNA. In terms of biological role, formation of pseudouridine at positions 38, 39 and 40 in the anticodon stem and loop of transfer RNAs. This chain is tRNA pseudouridine synthase A, found in Prochlorococcus marinus (strain MIT 9312).